The sequence spans 395 residues: Fe(3+) ions import ATP-binding protein FbpC 2 (395 aa).

Residues 1 to 21 (MHIAQELADETCNSPRGAGHA) form a disordered region. In terms of domain architecture, ABC transporter spans 23–264 (LRYPSDRRTA…PKTLFVADFI (242 aa)). Residue 66–73 (GPSGCGKT) participates in ATP binding.

It belongs to the ABC transporter superfamily. Fe(3+) ion importer (TC 3.A.1.10) family. As to quaternary structure, the complex is composed of two ATP-binding proteins (FbpC), two transmembrane proteins (FbpB) and a solute-binding protein (FbpA).

The protein resides in the cell inner membrane. The catalysed reaction is Fe(3+)(out) + ATP + H2O = Fe(3+)(in) + ADP + phosphate + H(+). Functionally, part of the ABC transporter complex FbpABC involved in Fe(3+) ions import. Responsible for energy coupling to the transport system. The polypeptide is Fe(3+) ions import ATP-binding protein FbpC 2 (Rhizobium meliloti (strain 1021) (Ensifer meliloti)).